The primary structure comprises 203 residues: Small ribosomal subunit protein uS4c (203 aa).

The tract at residues 17–39 (TLPGLTTKKSNKLNRPGKDGNTD) is disordered. Residues 92–164 (MRLDTLCFTL…IKNNQVREIP (73 aa)) form the S4 RNA-binding domain.

The protein belongs to the universal ribosomal protein uS4 family. As to quaternary structure, part of the 30S ribosomal subunit. Contacts protein S5. The interaction surface between S4 and S5 is involved in control of translational fidelity.

Its subcellular location is the plastid. The protein localises to the chloroplast. One of the primary rRNA binding proteins, it binds directly to 16S rRNA where it nucleates assembly of the body of the 30S subunit. Functionally, with S5 and S12 plays an important role in translational accuracy. This chain is Small ribosomal subunit protein uS4c (rps4), found in Phaeodactylum tricornutum (strain CCAP 1055/1).